The chain runs to 353 residues: Fe(3+) ions import ATP-binding protein FbpC (353 aa).

Residues 9–239 form the ABC transporter domain; sequence VTFENVTKKF…PASAFIADFM (231 aa). Residue 41-48 participates in ATP binding; that stretch reads GPSGCGKT.

The protein belongs to the ABC transporter superfamily. Fe(3+) ion importer (TC 3.A.1.10) family. The complex is composed of two ATP-binding proteins (FbpC), two transmembrane proteins (FbpB) and a solute-binding protein (FbpA).

The protein localises to the cell inner membrane. The catalysed reaction is Fe(3+)(out) + ATP + H2O = Fe(3+)(in) + ADP + phosphate + H(+). In terms of biological role, part of the ABC transporter complex FbpABC involved in Fe(3+) ions import. Responsible for energy coupling to the transport system. The chain is Fe(3+) ions import ATP-binding protein FbpC from Brucella abortus (strain 2308).